The following is a 196-amino-acid chain: Large ribosomal subunit protein uL5 (196 aa).

Belongs to the universal ribosomal protein uL5 family. In terms of assembly, part of the 50S ribosomal subunit; part of the 5S rRNA/L5/L18/L25 subcomplex. Contacts the 5S rRNA and the P site tRNA. Forms a bridge to the 30S subunit in the 70S ribosome.

Its function is as follows. This is one of the proteins that bind and probably mediate the attachment of the 5S RNA into the large ribosomal subunit, where it forms part of the central protuberance. In the 70S ribosome it contacts protein S13 of the 30S subunit (bridge B1b), connecting the 2 subunits; this bridge is implicated in subunit movement. Contacts the P site tRNA; the 5S rRNA and some of its associated proteins might help stabilize positioning of ribosome-bound tRNAs. The chain is Large ribosomal subunit protein uL5 from Chlorobium phaeobacteroides (strain BS1).